Here is a 597-residue protein sequence, read N- to C-terminus: Period protein homolog lin-42 (597 aa).

Residues 1-44 (MEPAGHSSATHNIVVPNANPTQPQPLAPAMREEGATLSPPNTWS) are disordered. The PAS domain maps to 155–223 (LQASHVSSNF…VRQAHIDLHN (69 aa)). Disordered regions lie at residues 313–335 (PVPSTSRHSHHHHHSSLKDQNQG), 418–450 (KSQSRPESPAKQDEPFDEKKYPPQTPLTREALT), 473–509 (DDVPSSPPAKRTTPIHWTSSSQNHYRTMAPAPPPPPG), and 555–597 (DGLL…DSQN). Positions 425 to 438 (SPAKQDEPFDEKKY) are enriched in basic and acidic residues. The span at 487-497 (IHWTSSSQNHY) shows a compositional bias: polar residues. The segment covering 561–577 (GATSTGGASPTSGTNSP) has biased composition (low complexity).

Its subcellular location is the nucleus. The protein localises to the cytoplasm. Functionally, transcriptional repressor which interacts with the promoter region of target genes. Has a specific role in developmental timing where it regulates temporal expression of a number of miRNAs and mRNAs. Controls temporal cell fate transition during embryonic and early larval development by restricting the expression of specific miRNAs, including let-7, miR-48, lin-4, miR-35 and miR-58. Restricts the accumulation of lin-29 in the hypodermis to the larval L4 stage, thus controlling terminal differentiation of seam cells. Has a role in the miRNA-mediated specification of asymmetric gene expression patterns in gustatory neurons. May also regulate genes involved in other biological processes including transport, small molecule metabolism, and growth. Inhibits dauer formation, by antagonizing daf-12. In terms of biological role, specifically required for maintaining the timing of larval development and molting cycle rhythms. This is Period protein homolog lin-42 from Caenorhabditis elegans.